We begin with the raw amino-acid sequence, 314 residues long: Protein OPG185 (314 aa).

An N-terminal signal peptide occupies residues 1-16 (MARLPILLLLISLVYS). One can recognise an Ig-like V-type domain in the interval 17 to 121 (TPSPQTSKKI…NDTDKVDYEE (105 aa)). Residues 17–278 (TPSPQTSKKI…SNYKTKDFVE (262 aa)) lie on the Virion surface side of the membrane. Residues C34 and C103 are joined by a disulfide bond. 5 N-linked (GlcNAc...) asparagine; by host glycosylation sites follow: N37, N38, N69, N112, and N161. The disordered stretch occupies residues 192 to 217 (NTVSTTSRESTTDETPEPITDKEEDH). Residue N253 is glycosylated (N-linked (GlcNAc...) asparagine; by host). A helical transmembrane segment spans residues 279–302 (IFGITALIILSAVAIFCITYYICN). Topologically, residues 303–314 (KRSRKYKTENKV) are intravirion.

The protein belongs to the orthopoxvirus OPG185 family. Heterodimerizes with OPG040. The heterodimer OPG185-OPG040 interacts with components of the entry fusion complex OPG143 and OPG094. Heterodimer with C3/VPC protein; disulfide-linked. Post-translationally, glycosylated; contains phosphate and sulfate-substituted glycans. O-glycosylation is required for hemagglutination and hemadsorption activities of infected cell membranes.

The protein resides in the virion membrane. It localises to the host membrane. Prevents cell to cell fusion by interacting with and directing the viral OPG040 protein on the host plasma membrane. The OPG185-OPG040 complex associates with components of the entry fusion complex (EFC) presumably to avoid superinfection and syncytium formation. Via its interaction with C3/VCP protein, protects the infected cell and probably also the extracellular enveloped virus from complement attack. This chain is Protein OPG185 (OPG185), found in Bos taurus (Bovine).